The primary structure comprises 179 residues: Lebocin-3 (179 aa).

Residues 1–16 (MYKFLVFSSVLVLFFA) form the signal peptide. Positions 17-120 (QASCQRFIQP…QPIESHRNTR (104 aa)) are excised as a propeptide. Residue T135 is glycosylated (O-linked (GalNAc...) threonine). The propeptide occupies 153-179 (RRHASEDQEELRQYNEHFLIPRDIFQE).

This sequence belongs to the lebocin family. Post-translationally, O-glycosylation is important for the antibacterial activity of lebocin. Hemolymph. Produced in fat body.

The protein resides in the secreted. Functionally, antibacterial peptide. The protein is Lebocin-3 (LEB3) of Bombyx mori (Silk moth).